Consider the following 328-residue polypeptide: Complex I intermediate-associated protein 30, mitochondrial (328 aa).

The N-terminal 24 residues, 1-24, are a transit peptide targeting the mitochondrion; sequence MSSIHKLLTGIYIHKNFLRPRAAL. Residues 44 to 54 show a composition bias toward polar residues; sequence VTSVDRASQQG. The tract at residues 44-80 is disordered; the sequence is VTSVDRASQQGKTEEGLQGHDHKEVALDAPSPDRTPE. The span at 55-69 shows a compositional bias: basic and acidic residues; that stretch reads KTEEGLQGHDHKEVA. Ser-319 bears the Phosphoserine mark.

Belongs to the CIA30 family. Part of the mitochondrial complex I assembly/MCIA complex that comprises at least the core subunits TMEM126B, NDUFAF1, ECSIT and ACAD9 and complement subunits such as COA1 and TMEM186. Interacts with ECSIT. Interacts with ACAD9. At early stages of complex I assembly, it is found in intermediate subcomplexes that contain different subunits including NDUFB6, NDUFA6, NDUFA9, NDUFS3, NDUFS7, ND1, ND2 and ND3. Interacts with TMEM70 and TMEM242.

It localises to the mitochondrion. The protein resides in the mitochondrion matrix. As part of the MCIA complex, involved in the assembly of the mitochondrial complex I. This Mus musculus (Mouse) protein is Complex I intermediate-associated protein 30, mitochondrial.